Here is a 349-residue protein sequence, read N- to C-terminus: Farnesyl pyrophosphate synthase (349 aa).

Isopentenyl diphosphate is bound by residues lysine 48, arginine 51, and glutamine 90. Mg(2+)-binding residues include aspartate 97 and aspartate 101. Arginine 106 contacts dimethylallyl diphosphate. Arginine 107 is a binding site for isopentenyl diphosphate. Dimethylallyl diphosphate-binding residues include lysine 194, threonine 195, glutamine 234, lysine 251, and lysine 260.

The protein belongs to the FPP/GGPP synthase family. Mg(2+) is required as a cofactor.

The protein localises to the cytoplasm. It catalyses the reaction isopentenyl diphosphate + dimethylallyl diphosphate = (2E)-geranyl diphosphate + diphosphate. It carries out the reaction isopentenyl diphosphate + (2E)-geranyl diphosphate = (2E,6E)-farnesyl diphosphate + diphosphate. It functions in the pathway isoprenoid biosynthesis; farnesyl diphosphate biosynthesis; farnesyl diphosphate from geranyl diphosphate and isopentenyl diphosphate: step 1/1. Its pathway is isoprenoid biosynthesis; geranyl diphosphate biosynthesis; geranyl diphosphate from dimethylallyl diphosphate and isopentenyl diphosphate: step 1/1. Catalyzes the sequential condensation of isopentenyl pyrophosphate with the allylic pyrophosphates, dimethylallyl pyrophosphate, and then with the resultant geranylpyrophosphate to the ultimate product farnesyl pyrophosphate. This chain is Farnesyl pyrophosphate synthase (FPS1), found in Kluyveromyces lactis (strain ATCC 8585 / CBS 2359 / DSM 70799 / NBRC 1267 / NRRL Y-1140 / WM37) (Yeast).